Consider the following 299-residue polypeptide: GTPase Era (299 aa).

Positions 5-175 constitute an Era-type G domain; the sequence is RSGFVCFVGR…TNVLVSQLPP (171 aa). The interval 13-20 is G1; that stretch reads GRPNTGKS. Position 13-20 (13-20) interacts with GTP; the sequence is GRPNTGKS. Residues 39–43 form a G2 region; it reads QTTRH. Positions 60-63 are G3; it reads DTPG. GTP contacts are provided by residues 60–64 and 124–127; these read DTPGL and TKID. The interval 124–127 is G4; sequence TKID. The tract at residues 154–156 is G5; it reads VSA. A KH type-2 domain is found at 206–285; it reads VRDELPHSLA…YLDLRVKIAK (80 aa).

Belongs to the TRAFAC class TrmE-Era-EngA-EngB-Septin-like GTPase superfamily. Era GTPase family. As to quaternary structure, monomer. Stays in the monomer conformation, irrespective of the presence of GTP.

It is found in the cell envelope. The protein resides in the secreted. The protein localises to the cell wall. Its activity is regulated as follows. Co-purified with RNA upon overexpression in E.coli, but RNAs do not appear to influence the GTPase activity. Its function is as follows. Exhibits GTPase activity. Binds RNA but is probably not involved in ribosome assembly in mycobacteria. Cannot use ATP. The polypeptide is GTPase Era (Mycolicibacterium smegmatis (strain ATCC 700084 / mc(2)155) (Mycobacterium smegmatis)).